The primary structure comprises 157 residues: Crossover junction endodeoxyribonuclease RuvC (157 aa).

Residues Asp7, Glu66, and Asp139 contribute to the active site. The Mg(2+) site is built by Asp7, Glu66, and Asp139.

The protein belongs to the RuvC family. As to quaternary structure, homodimer which binds Holliday junction (HJ) DNA. The HJ becomes 2-fold symmetrical on binding to RuvC with unstacked arms; it has a different conformation from HJ DNA in complex with RuvA. In the full resolvosome a probable DNA-RuvA(4)-RuvB(12)-RuvC(2) complex forms which resolves the HJ. Mg(2+) is required as a cofactor.

The protein resides in the cytoplasm. The catalysed reaction is Endonucleolytic cleavage at a junction such as a reciprocal single-stranded crossover between two homologous DNA duplexes (Holliday junction).. Functionally, the RuvA-RuvB-RuvC complex processes Holliday junction (HJ) DNA during genetic recombination and DNA repair. Endonuclease that resolves HJ intermediates. Cleaves cruciform DNA by making single-stranded nicks across the HJ at symmetrical positions within the homologous arms, yielding a 5'-phosphate and a 3'-hydroxyl group; requires a central core of homology in the junction. The consensus cleavage sequence is 5'-(A/T)TT(C/G)-3'. Cleavage occurs on the 3'-side of the TT dinucleotide at the point of strand exchange. HJ branch migration catalyzed by RuvA-RuvB allows RuvC to scan DNA until it finds its consensus sequence, where it cleaves and resolves the cruciform DNA. Its function is as follows. Required for efficient infection in a mouse model system. This is Crossover junction endodeoxyribonuclease RuvC from Helicobacter pylori (strain G27).